The primary structure comprises 79 residues: UPF0291 protein BH2353 (79 aa).

Positions 57–79 (GAGNDVTPDKLKQSKNKYRNDIH) are disordered. The span at 63–79 (TPDKLKQSKNKYRNDIH) shows a compositional bias: basic and acidic residues.

The protein belongs to the UPF0291 family.

The protein resides in the cytoplasm. This chain is UPF0291 protein BH2353, found in Halalkalibacterium halodurans (strain ATCC BAA-125 / DSM 18197 / FERM 7344 / JCM 9153 / C-125) (Bacillus halodurans).